The sequence spans 1009 residues: MREEALESICAALSISFTEDPDHLESIIDRFSEIFKVKDHLNQLRKKCEKFQTFTLEIRPVGSSNCTENVYAYIIESETCRQLELKPTGTTKLEIGSDKNVSLKFGLSQKKDSTTSKKGLSRSASLLKKLKFSDKKNLDELKISIFPLDIAVRKNINLGSGKSTLLEMKLIRNDHRNMIQCLEFDDFLEMTRSFHEWQAQISESELYDGSLGDPTFSMFYSIAFFFEIPSFVLKLTEMTCFLVWDDEMKKLDERALADVSLKMTACESEVDLQHPLLSPALSYLNDCTCNTIRCILVPFSTEPFFPPVSPSRLKSINVALKLIADICVLDVWDEFENLANPSNFLSSELKKLLESSAERYGESLKKQEFNELCRTILNLWMSLSNESQPYYIFFHQFDINYIGAAMLKLDKYLAESIQISLKCQLDLLNLRIPTELENFTKTTMRLFVTLRNLLNMVEAFHLPECQLFHFEEWFTDISVFWTYSWREVTLQMVERTITLDEDGDSVKYGARRPLPAGLYSFLCIQKGISDDLARLEFTFPHHLVVCAASVVNIMCQNINAYARKLFSEAMRNHEEKASRLVRATNGIEQAMCFVEEGYRRFAQFQRLEEYVDVDDLSAVRSTSIRLLKSTRDTCEIQVSTLLSHFVNLKTDIVLKIAKNLCADGKESNSGLKSYMRELASSERIESILECCYGLVDDVRCLLLPNCFKLSTQHFATSLEQQIRKNIRQKQPAEYYSNIYVGFLNILIFKRLKQMYLKFQIALKYIYEFLEIEDRKDIELLSNLHLNSFSTKDLILSYYDSLCEKIDRTRFGNAPHVDVHISYVKMVDEDTISIQIKLIKMSPIEWIDVISDRVDYFVRLELFPKILFPSNKFESPTTNPMPQSTRPQWKQLFEIRVPLECFFLRGACLAISVFDHERFIDRLVGRGFISLHSVPQASEEKPTQRLQVPLLPNDFSDQNNVFYQLLKTRACRDSIAKEFIETRTRRHQRIRALQHYIRINRNRVGHMLLG.

A C2 domain is found at 812–945; sequence NAPHVDVHIS…ASEEKPTQRL (134 aa).

Belongs to the unc-13 family. As to expression, expressed in intestine, body wall muscles and some amphid neurons.

Its function is as follows. Involved in retrograde signaling from post-synaptic cells to pre-synaptic neurons, probably by regulating vesicle exocytosis in post-synaptic cells. Acts in muscles, to regulate the localization of synaptic vesicle fusion protein unc-13 likely during vesicle exocytosis and thus regulate retrograde signaling at the neuromuscular junction (NMJ). Regulates anterior body muscle contractions (aBOC) and the expulsion steps during the defecation motor program (DMP). Probably by regulating DMP, plays a homeostatic role in the uptake of triglycerides. Regulates locomotion. This chain is C2 domain-containing protein aex-1, found in Caenorhabditis elegans.